Here is a 66-residue protein sequence, read N- to C-terminus: Period circadian protein (66 aa).

The disordered stretch occupies residues 1–66 (EGSGGSGSSG…VTLTESLLNK (66 aa)). Over residues 9-31 (SGNFTTGSNIHMSSVTNTSNAGT) the composition is skewed to low complexity. 4 consecutive repeat copies span residues 30–31 (GT), 32–33 (GT), 35–36 (GT), and 37–38 (GN). The segment at 30-53 (GTGTSGTGNSGGGSGGGTGPGSGA) is 4 X 2 AA tandem repeats of G-[TN]. Residues 32–51 (GTSGTGNSGGGSGGGTGPGS) are compositionally biased toward gly residues.

In terms of assembly, forms a heterodimer with timeless (TIM); the complex then translocates into the nucleus. In terms of processing, phosphorylated with a circadian rhythmicity, probably by the double-time protein (dbt). Phosphorylation could be implicated in the stability of per monomer and in the formation of heterodimer per-tim.

The protein localises to the nucleus. The protein resides in the cytoplasm. It is found in the perinuclear region. In terms of biological role, essential for biological clock functions. Determines the period length of circadian and ultradian rhythms; an increase in PER dosage leads to shortened circadian rhythms and a decrease leads to lengthened circadian rhythms. Essential for the circadian rhythmicity of locomotor activity, eclosion behavior, and for the rhythmic component of the male courtship song that originates in the thoracic nervous system. The biological cycle depends on the rhythmic formation and nuclear localization of the TIM-PER complex. Light induces the degradation of TIM, which promotes elimination of PER. Nuclear activity of the heterodimer coordinatively regulates PER and TIM transcription through a negative feedback loop. Behaves as a negative element in circadian transcriptional loop. Does not appear to bind DNA, suggesting indirect transcriptional inhibition. This is Period circadian protein (per) from Drosophila saltans (Fruit fly).